The following is a 225-amino-acid chain: Protein LiaH (225 aa).

Coiled-coil stretches lie at residues 58 to 151 (KKYE…KEHM) and 161 to 182 (ESAYREFLRIENRIEEMEIRAN).

The protein belongs to the PspA/Vipp/IM30 family.

In Bacillus subtilis (strain 168), this protein is Protein LiaH (liaH).